The primary structure comprises 1531 residues: Multidrug resistance-associated protein 1 (1531 aa).

At 1 to 33 (MALRGFCSADGSDPLWDWNVTWYTSNPDFTKCF) the chain is on the extracellular side. N19 carries N-linked (GlcNAc...) asparagine glycosylation. A helical membrane pass occupies residues 34 to 54 (QNTVLVWVPCFYLWACFPFYF). Over 55 to 74 (LYLSRHDRGYIQMTLLNKTK) the chain is Cytoplasmic. Residues 75 to 95 (TALGFLLWIVCWADLFYSFWE) form a helical membrane-spanning segment. Residues 96–100 (RSRGI) lie on the Extracellular side of the membrane. A helical transmembrane segment spans residues 101-121 (FLAPVFLVSPTLLGITMLLAT). The Cytoplasmic portion of the chain corresponds to 122-133 (FLIQLERRKGVQ). The chain crosses the membrane as a helical span at residues 134 to 154 (SSGIMLTFWLVALLCALAILR). The Extracellular portion of the chain corresponds to 155-172 (SKIMTALKEDVQVDLFRD). Residues 173–193 (MTFYVYFSLVLIQLVLSCFSD) traverse the membrane as a helical segment. The Cytoplasmic portion of the chain corresponds to 194–316 (RSPLFSETIH…KEWNPSLFKV (123 aa)). Y277 carries the post-translational modification Phosphotyrosine. Residue S289 is modified to Phosphoserine. A helical transmembrane segment spans residues 317–337 (LYKTFGPYFLMSFFFKAIHDL). One can recognise an ABC transmembrane type-1 1 domain in the interval 325–608 (FLMSFFFKAI…LPMVISSIVQ (284 aa)). Residues 338–363 (MMFSGPEILKLLINFVNDTKAPDWQG) lie on the Extracellular side of the membrane. The helical transmembrane segment at 364–384 (YFYTALLFVAACLQTLVLHQY) threads the bilayer. The Cytoplasmic segment spans residues 385-440 (FHICFVSGMRIKTAVIGAVYRKALVITNAARKSSTVGEIVNLMSVDAQRFMDLATY). Residues 441-461 (INMIWSAPLQVILALYLLWRN) form a helical membrane-spanning segment. At 462-464 (LGP) the chain is on the extracellular side. The helical transmembrane segment at 465-485 (PILAGVAVMVLMVPVNAVMAM) threads the bilayer. Topologically, residues 486 to 547 (KTKTYQVAHM…VLKKSAYLAA (62 aa)) are cytoplasmic. K503 carries the N6-succinyllysine modification. Residues 548–568 (VGTFTWVCTPFLVALCTFAVY) form a helical membrane-spanning segment. Over 569–590 (VTIDKNNVLDAQKAFVSLALFN) the chain is Extracellular. The chain crosses the membrane as a helical span at residues 591–611 (ILRFPLNILPMVISSIVQASV). At 612 to 967 (SLKRLRIFLS…VKLSVYWDYM (356 aa)) the chain is on the cytoplasmic side. Residues 644–868 (ITVRNATFTW…DGAFAEFLRT (225 aa)) enclose the ABC transporter 1 domain. Residue 678–685 (GQVGCGKS) coordinates ATP. The disordered stretch occupies residues 871 to 893 (SAEQEQDPEDNGVTGVSGPGKEA). Phosphoserine is present on residues S905, S915, and S930. A disordered region spans residues 917–938 (SSSYSGDVSRQHNSTAELQKDG). A compositionally biased stretch (polar residues) spans 922–933 (GDVSRQHNSTAE). The chain crosses the membrane as a helical span at residues 968-988 (KAIGLFISFLSIFLFICNHVA). The ABC transmembrane type-1 2 domain occupies 975–1256 (SFLSIFLFIC…LVRMSSEMET (282 aa)). Residues 989–1025 (ALASNYWLSLWTDDPIVNGTQEHTKVRLSVYGALGIS) lie on the Extracellular side of the membrane. N-linked (GlcNAc...) asparagine glycosylation occurs at N1006. Residues 1026–1046 (QGIAVFGYSMAVSIGGILASR) traverse the membrane as a helical segment. Residues 1047-1089 (CLHVDLLHSILRSPMSFFERTPSGNLVNRFSKELDTVDSMIPE) lie on the Cytoplasmic side of the membrane. A helical transmembrane segment spans residues 1090–1110 (VIKMFMGSLFNVIGACIVILL). A1111 is a topological domain (extracellular). A helical membrane pass occupies residues 1112-1132 (TPIAAIIIPPLGLIYFFVQRF). At 1133–1203 (YVASSRQLKR…VANRWLAVRL (71 aa)) the chain is on the cytoplasmic side. Residues 1204–1224 (ECVGNCIVLFAALFAVISRHS) form a helical membrane-spanning segment. Over 1225–1226 (LS) the chain is Extracellular. A helical membrane pass occupies residues 1227–1247 (AGLVGLSVSYSLQVTTYLNWL). At 1248 to 1531 (VRMSSEMETN…YNMARDAGLV (284 aa)) the chain is on the cytoplasmic side. The region spanning 1293–1527 (VEFRNYCLRY…RGLFYNMARD (235 aa)) is the ABC transporter 2 domain. 1327–1334 (GRTGAGKS) contributes to the ATP binding site.

The protein belongs to the ABC transporter superfamily. ABCC family. Conjugate transporter (TC 3.A.1.208) subfamily.

It is found in the cell membrane. The protein localises to the basolateral cell membrane. The enzyme catalyses ATP + H2O + xenobioticSide 1 = ADP + phosphate + xenobioticSide 2.. It carries out the reaction an S-substituted glutathione(in) + ATP + H2O = an S-substituted glutathione(out) + ADP + phosphate + H(+). The catalysed reaction is sphing-4-enine 1-phosphate(in) + ATP + H2O = sphing-4-enine 1-phosphate(out) + ADP + phosphate + H(+). It catalyses the reaction leukotriene C4(in) + ATP + H2O = leukotriene C4(out) + ADP + phosphate + H(+). The enzyme catalyses 17beta-estradiol 17-O-(beta-D-glucuronate)(in) + ATP + H2O = 17beta-estradiol 17-O-(beta-D-glucuronate)(out) + ADP + phosphate + H(+). It carries out the reaction daunorubicin(in) + ATP + H2O = daunorubicin(out) + ADP + phosphate + H(+). The catalysed reaction is vincristine(in) + ATP + H2O = vincristine(out) + ADP + phosphate + H(+). It catalyses the reaction 2',3'-cGAMP(in) + ATP + H2O = 2',3'-cGAMP(out) + ADP + phosphate + H(+). The enzyme catalyses S-[(2E,6E,10E)-geranylgeranyl]-L-glutathione(in) + ATP + H2O = S-[(2E,6E,10E)-geranylgeranyl]-L-glutathione(out) + ADP + phosphate + H(+). It carries out the reaction prostaglandin A2-S-(R)-glutathione(in) + ATP + H2O = prostaglandin A2-S-(R)-glutathione(out) + ADP + phosphate + H(+). The catalysed reaction is prostaglandin A2-S-(S)-glutathione(in) + ATP + H2O = prostaglandin A2-S-(S)-glutathione(out) + ADP + phosphate + H(+). With respect to regulation, MK 571 inhibits sphingosine 1-phosphate and leukotriene C4 export. Mediates export of organic anions and drugs from the cytoplasm. Mediates ATP-dependent transport of glutathione and glutathione conjugates, leukotriene C4, estradiol-17-beta-o-glucuronide, methotrexate, antiviral drugs and other xenobiotics. Confers resistance to anticancer drugs by decreasing accumulation of drug in cells, and by mediating ATP- and GSH-dependent drug export. Hydrolyzes ATP with low efficiency. Catalyzes the export of sphingosine 1-phosphate from mast cells independently of their degranulation. Participates in inflammatory response by allowing export of leukotriene C4 from leukotriene C4-synthesizing cells. Mediates ATP-dependent, GSH-independent cyclic GMP-AMP (cGAMP) export. Thus, by limiting intracellular cGAMP concentrations negatively regulates the cGAS-STING pathway. Exports S-geranylgeranyl-glutathione (GGG) in lymphoid cells and stromal compartments of lymphoid organs. ABCC1 (via extracellular transport) with GGT5 (via GGG catabolism) establish GGG gradients within lymphoid tissues to position P2RY8-positive lymphocytes at germinal centers in lymphoid follicles and restrict their chemotactic transmigration from blood vessels to the bone marrow parenchyma. Mediates basolateral export of GSH-conjugated R- and S-prostaglandin A2 diastereomers in polarized epithelial cells. The polypeptide is Multidrug resistance-associated protein 1 (Macaca fascicularis (Crab-eating macaque)).